The following is a 296-amino-acid chain: Cyclin-dependent kinase 1 (296 aa).

The Protein kinase domain occupies 5-288 (FQKLEKIGEG…AKNGLSHKYF (284 aa)). Residues 11 to 19 (IGEGTYGVV) and Lys-34 each bind ATP. Asp-130 acts as the Proton acceptor in catalysis.

Belongs to the protein kinase superfamily. CMGC Ser/Thr protein kinase family. CDC2/CDKX subfamily.

Its subcellular location is the nucleus. It catalyses the reaction L-seryl-[protein] + ATP = O-phospho-L-seryl-[protein] + ADP + H(+). The enzyme catalyses L-threonyl-[protein] + ATP = O-phospho-L-threonyl-[protein] + ADP + H(+). Cyclin-dependent kinase that acts as a master regulator of the mitotic and meiotic cell cycles. This is Cyclin-dependent kinase 1 from Encephalitozoon cuniculi (strain GB-M1) (Microsporidian parasite).